Here is a 134-residue protein sequence, read N- to C-terminus: Small ribosomal subunit protein uS8 (134 aa).

Belongs to the universal ribosomal protein uS8 family. As to quaternary structure, part of the 30S ribosomal subunit. Contacts proteins S5 and S12.

Its function is as follows. One of the primary rRNA binding proteins, it binds directly to 16S rRNA central domain where it helps coordinate assembly of the platform of the 30S subunit. The sequence is that of Small ribosomal subunit protein uS8 from Thermosipho melanesiensis (strain DSM 12029 / CIP 104789 / BI429).